The following is a 191-amino-acid chain: MLAIGITGSYASGKTFMLDYLTEKGYKTFCADRCIKELYQDVVLQTQILKLLPELESFNIRKISNLIYNNDLAREKLQNFIYPLLIDKLILFKKENANSKFGFAEIPLLYEAKFEKYFDFVVTIYCSEAIRMQRAITRSSFDIEIYNKIKEIQLSQESKIAKADFAINSGVDMLDLEKQIAKLIKDLECRV.

The region spanning 3-191 (AIGITGSYAS…KLIKDLECRV (189 aa)) is the DPCK domain. 11-16 (ASGKTF) provides a ligand contact to ATP.

The protein belongs to the CoaE family.

Its subcellular location is the cytoplasm. The enzyme catalyses 3'-dephospho-CoA + ATP = ADP + CoA + H(+). It functions in the pathway cofactor biosynthesis; coenzyme A biosynthesis; CoA from (R)-pantothenate: step 5/5. Functionally, catalyzes the phosphorylation of the 3'-hydroxyl group of dephosphocoenzyme A to form coenzyme A. This Rickettsia conorii (strain ATCC VR-613 / Malish 7) protein is Dephospho-CoA kinase.